We begin with the raw amino-acid sequence, 288 residues long: 4-diphosphocytidyl-2-C-methyl-D-erythritol kinase (288 aa).

The active site involves Lys8. An ATP-binding site is contributed by 92–102; sequence PVAAGMAGGST. Asp134 is an active-site residue.

This sequence belongs to the GHMP kinase family. IspE subfamily.

The catalysed reaction is 4-CDP-2-C-methyl-D-erythritol + ATP = 4-CDP-2-C-methyl-D-erythritol 2-phosphate + ADP + H(+). It functions in the pathway isoprenoid biosynthesis; isopentenyl diphosphate biosynthesis via DXP pathway; isopentenyl diphosphate from 1-deoxy-D-xylulose 5-phosphate: step 3/6. Functionally, catalyzes the phosphorylation of the position 2 hydroxy group of 4-diphosphocytidyl-2C-methyl-D-erythritol. This chain is 4-diphosphocytidyl-2-C-methyl-D-erythritol kinase, found in Clostridium perfringens (strain ATCC 13124 / DSM 756 / JCM 1290 / NCIMB 6125 / NCTC 8237 / Type A).